The primary structure comprises 376 residues: Succinyl-diaminopimelate desuccinylase (376 aa).

Position 66 (histidine 66) interacts with Zn(2+). Aspartate 68 is a catalytic residue. Position 99 (aspartate 99) interacts with Zn(2+). Glutamate 133 serves as the catalytic Proton acceptor. Zn(2+) is bound by residues glutamate 134, glutamate 162, and histidine 348.

It belongs to the peptidase M20A family. DapE subfamily. As to quaternary structure, homodimer. It depends on Zn(2+) as a cofactor. Requires Co(2+) as cofactor.

It carries out the reaction N-succinyl-(2S,6S)-2,6-diaminopimelate + H2O = (2S,6S)-2,6-diaminopimelate + succinate. It functions in the pathway amino-acid biosynthesis; L-lysine biosynthesis via DAP pathway; LL-2,6-diaminopimelate from (S)-tetrahydrodipicolinate (succinylase route): step 3/3. Its function is as follows. Catalyzes the hydrolysis of N-succinyl-L,L-diaminopimelic acid (SDAP), forming succinate and LL-2,6-diaminopimelate (DAP), an intermediate involved in the bacterial biosynthesis of lysine and meso-diaminopimelic acid, an essential component of bacterial cell walls. In Xanthomonas oryzae pv. oryzae (strain PXO99A), this protein is Succinyl-diaminopimelate desuccinylase.